The following is a 196-amino-acid chain: Venom platylysin (196 aa).

The protein belongs to the redulysin-like family. Expressed by the venom gland.

The protein localises to the secreted. Functionally, probable insecticidal toxin that has been detected in a semi-pure insecticidal fraction. In Platymeris biguttatus (Two-spotted assassin bug), this protein is Venom platylysin.